Consider the following 526-residue polypeptide: Cyclin-L1 (526 aa).

The segment at 1–36 (MASGPHSTATAAAAASSAAPSAGGSSSGTTTTTTTT) is disordered. Cyclin-like regions lie at residues 88–190 (ELIQ…RVLK) and 203–287 (KIIV…ETLR). The disordered stretch occupies residues 318–526 (KGLNPDGTPA…SRSGHGRHRR (209 aa)). Position 325 is a phosphothreonine (threonine 325). 2 positions are modified to phosphoserine: serine 335 and serine 338. Glycyl lysine isopeptide (Lys-Gly) (interchain with G-Cter in SUMO2) cross-links involve residues lysine 339 and lysine 347. A compositionally biased stretch (basic and acidic residues) spans 342 to 352 (SPREVKAEEKS). A phosphoserine mark is found at serine 352 and serine 355. Residues 361–370 (VKKEPEDRQQ) are compositionally biased toward basic and acidic residues. A Glycyl lysine isopeptide (Lys-Gly) (interchain with G-Cter in SUMO2) cross-link involves residue lysine 362. A Phosphoserine modification is found at serine 374. Composition is skewed to basic residues over residues 382–418 (DSKRSRNSRSASRSRSRTRSRSRSHTPRRHYNNRRSR), 438–452 (RRHHNHGSPHLKAKH), 460–476 (SNRHGHKRKKSRSRSQS), and 486–498 (KKHRHERGHHRDR). An RS region spans residues 390-432 (RSASRSRSRTRSRSRSHTPRRHYNNRRSRSGTYSSRSRSRSRS). Serine 445 is subject to Phosphoserine. Residues 499-508 (RERSRSFERS) show a composition bias toward basic and acidic residues. Positions 509–526 (HKSKHHGGSRSGHGRHRR) are enriched in basic residues.

Belongs to the cyclin family. Cyclin L subfamily. As to quaternary structure, (Microbial infection) Interacts with human herpes virus 1 (HHV-1) transcriptional regulator ICP22. In terms of assembly, interacts with POLR2A via its hyperphosphorylated C-terminal domain (CTD). Interacts with CDK11A, CDK12 and CDK13. Isoforms 1 and 2, but not isoform 3, interact with CDK11B. May form a ternary complex with CDK11B and casein kinase II (CKII). Interacts with pre-mRNA-splicing factors, including at least SRSF1, SRSF2 and SRSF7/SLU7. In terms of tissue distribution, widely expressed. Overexpression in primary tumors of head and neck squamous cell carcinomas (HNSCC).

The protein localises to the nucleus speckle. It localises to the nucleus. Its subcellular location is the nucleoplasm. Functionally, involved in pre-mRNA splicing. Functions in association with cyclin-dependent kinases (CDKs). Inhibited by the CDK-specific inhibitor CDKN1A/p21. May play a role in the regulation of RNA polymerase II (pol II). May be a candidate proto-oncogene in head and neck squamous cell carcinomas (HNSCC). This Homo sapiens (Human) protein is Cyclin-L1 (CCNL1).